Here is a 181-residue protein sequence, read N- to C-terminus: Dual-action ribosomal maturation protein DarP (181 aa).

Residues 1-24 (MTGIKRPMSQYQDDNEWEDWGPSK) form a disordered region.

This sequence belongs to the DarP family.

It is found in the cytoplasm. In terms of biological role, member of a network of 50S ribosomal subunit biogenesis factors which assembles along the 30S-50S interface, preventing incorrect 23S rRNA structures from forming. Promotes peptidyl transferase center (PTC) maturation. This is Dual-action ribosomal maturation protein DarP from Aeromonas hydrophila subsp. hydrophila (strain ATCC 7966 / DSM 30187 / BCRC 13018 / CCUG 14551 / JCM 1027 / KCTC 2358 / NCIMB 9240 / NCTC 8049).